The following is a 43-amino-acid chain: Protein PsbN (43 aa).

A helical transmembrane segment spans residues 7 to 29 (IVIFVSSLLLGITTYSVYTAFGP).

The protein belongs to the PsbN family.

It localises to the plastid. The protein localises to the chloroplast thylakoid membrane. Its function is as follows. May play a role in photosystem I and II biogenesis. The sequence is that of Protein PsbN from Phaeodactylum tricornutum (strain CCAP 1055/1).